The sequence spans 505 residues: Cytochrome P450 2K6 (505 aa).

The helical transmembrane segment at 7–27 threads the bilayer; the sequence is FLLQGSPTGTILGALLLFLVI. Residue Cys-448 participates in heme binding.

Belongs to the cytochrome P450 family. Requires heme as cofactor. In terms of tissue distribution, detected in liver and ovary.

It is found in the endoplasmic reticulum membrane. The protein localises to the microsome membrane. Functionally, metabolizes aflatoxin B1 (AFB1) to the cytotoxic derivative AFB1 exo-8,9-epoxide. Does not show activity towards lauric acid. This chain is Cytochrome P450 2K6, found in Danio rerio (Zebrafish).